Reading from the N-terminus, the 608-residue chain is Epsin-3 (608 aa).

Residues R8, K11, R25, N30, R63, and H73 each contribute to the a 1,2-diacyl-sn-glycero-3-phospho-(1D-myo-inositol-4,5-bisphosphate) site. The 133-residue stretch at 12–144 (NIVHNYSEAE…KDEERLRQER (133 aa)) folds into the ENTH domain. Disordered stretches follow at residues 150–266 (TKER…QSSI) and 281–475 (STHC…GPSA). The segment covering 174 to 189 (GSPSSYTSASSSPRYA) has biased composition (low complexity). A phosphoserine mark is found at S184 and S185. Residues 202-221 (EEELQLQLALAMSREEAEKG) enclose the UIM domain. Composition is skewed to basic and acidic residues over residues 214 to 229 (SREEAEKGGRSWKGDD) and 240 to 260 (GQRRRDREPEREERKEEEKLK). Tandem repeats lie at residues 287–289 (DPW), 310–312 (DPW), 337–339 (EPW), 353–355 (DPW), 370–372 (DPW), 495–497 (NPF), and 508–510 (NPF). A 5 X 3 AA repeats of [DE]-P-W region spans residues 287 to 372 (DPWDIPGLRP…KLPSTGVDPW (86 aa)). The segment covering 346–363 (PSGPPITDPWAPSSPTPK) has biased composition (pro residues). The interval 495 to 607 (NPFLTGLSAP…LPPQAGTNPF (113 aa)) is 3 X 3 AA repeats of N-P-F. Disordered regions lie at residues 498-530 (LTGLSAPSPTNPFGAGEQGRPTLNQMRTGSPAL) and 575-608 (GAFAPPPASLPQPLLPTSDPVGPLPPQAGTNPFL). Residues 578-588 (APPPASLPQPL) are compositionally biased toward pro residues. The stretch at 605 to 607 (NPF) is repeat 3.

This sequence belongs to the epsin family.

It localises to the cytoplasm. It is found in the cell cortex. Its subcellular location is the perinuclear region. The protein resides in the cytoplasmic vesicle. The protein localises to the clathrin-coated vesicle. It localises to the nucleus. The protein is Epsin-3 (Epn3) of Rattus norvegicus (Rat).